A 148-amino-acid polypeptide reads, in one-letter code: UPF0178 protein lpp0103 (148 aa).

Belongs to the UPF0178 family.

This is UPF0178 protein lpp0103 from Legionella pneumophila (strain Paris).